The chain runs to 414 residues: Snake venom metalloproteinase atrolysin-D (414 aa).

Residues 1–20 (MIEVLLVTICLAVFPYQGSS) form the signal peptide. The propeptide occupies 21-190 (IILESGNVND…KASDLNLNPD (170 aa)). Gln191 carries the pyrrolidone carboxylic acid modification. The 197-residue stretch at 197–393 (RYIELVVVAD…YKPQCILNKP (197 aa)) folds into the Peptidase M12B domain. Positions 200 and 284 each coordinate Ca(2+). 2 disulfides stabilise this stretch: Cys308–Cys388 and Cys348–Cys355. His333 is a binding site for Zn(2+). The active site involves Glu334. Zn(2+) is bound by residues His337 and His343. Residues Cys388 and Asn391 each contribute to the Ca(2+) site. The propeptide occupies 394-414 (LRIDPVSTPVSGNELLEAGEE).

It belongs to the venom metalloproteinase (M12B) family. P-I subfamily. In terms of assembly, monomer. Zn(2+) serves as cofactor. Post-translationally, the N-terminus is blocked. As to expression, expressed by the venom gland.

The protein localises to the secreted. It catalyses the reaction Cleavage of 5-His-|-Leu-6, 10-His-|-Leu-11, 14-Ala-|-Leu-15, 16-Tyr-|-Leu-17 and 23-Gly-|-Phe-24 of insulin B chain. With small molecule substrates prefers hydrophobic residue at P2' and small residue such as Ala, Gly at P1.. Snake venom zinc metalloproteinase that causes hemorrhage by provoking the degradation of the sub-endothelial matrix proteins (fibronectin, laminin, type IV collagen, nidogen, and gelatins). The protein is Snake venom metalloproteinase atrolysin-D of Crotalus atrox (Western diamondback rattlesnake).